Consider the following 100-residue polypeptide: Urease subunit gamma (100 aa).

Belongs to the urease gamma subunit family. As to quaternary structure, heterotrimer of UreA (gamma), UreB (beta) and UreC (alpha) subunits. Three heterotrimers associate to form the active enzyme.

Its subcellular location is the cytoplasm. It carries out the reaction urea + 2 H2O + H(+) = hydrogencarbonate + 2 NH4(+). Its pathway is nitrogen metabolism; urea degradation; CO(2) and NH(3) from urea (urease route): step 1/1. The sequence is that of Urease subunit gamma from Polaromonas naphthalenivorans (strain CJ2).